A 276-amino-acid polypeptide reads, in one-letter code: 2-dehydro-3-deoxyphosphooctonate aldolase (276 aa).

This sequence belongs to the KdsA family.

Its subcellular location is the cytoplasm. It catalyses the reaction D-arabinose 5-phosphate + phosphoenolpyruvate + H2O = 3-deoxy-alpha-D-manno-2-octulosonate-8-phosphate + phosphate. The protein operates within carbohydrate biosynthesis; 3-deoxy-D-manno-octulosonate biosynthesis; 3-deoxy-D-manno-octulosonate from D-ribulose 5-phosphate: step 2/3. Its pathway is bacterial outer membrane biogenesis; lipopolysaccharide biosynthesis. The chain is 2-dehydro-3-deoxyphosphooctonate aldolase from Xylella fastidiosa (strain 9a5c).